The sequence spans 128 residues: NADH-quinone oxidoreductase subunit A (128 aa).

3 helical membrane passes run 12–32 (FAIF…LSFL), 66–86 (FYLI…LYAW), and 96–116 (LGFY…VYLV).

It belongs to the complex I subunit 3 family. NDH-1 is composed of 14 different subunits. Subunits NuoA, H, J, K, L, M, N constitute the membrane sector of the complex.

It is found in the cell membrane. It catalyses the reaction a quinone + NADH + 5 H(+)(in) = a quinol + NAD(+) + 4 H(+)(out). NDH-1 shuttles electrons from NADH, via FMN and iron-sulfur (Fe-S) centers, to quinones in the respiratory chain. The immediate electron acceptor for the enzyme in this species is believed to be ubiquinone. Couples the redox reaction to proton translocation (for every two electrons transferred, four hydrogen ions are translocated across the cytoplasmic membrane), and thus conserves the redox energy in a proton gradient. This is NADH-quinone oxidoreductase subunit A from Baumannia cicadellinicola subsp. Homalodisca coagulata.